Here is a 390-residue protein sequence, read N- to C-terminus: Chorismate synthase (390 aa).

2 residues coordinate NADP(+): R39 and R45. FMN-binding positions include 132 to 134 (RSS), 253 to 254 (NA), G298, 313 to 317 (KPIPT), and R339.

The protein belongs to the chorismate synthase family. Homotetramer. Requires FMNH2 as cofactor.

The enzyme catalyses 5-O-(1-carboxyvinyl)-3-phosphoshikimate = chorismate + phosphate. Its pathway is metabolic intermediate biosynthesis; chorismate biosynthesis; chorismate from D-erythrose 4-phosphate and phosphoenolpyruvate: step 7/7. Its function is as follows. Catalyzes the anti-1,4-elimination of the C-3 phosphate and the C-6 proR hydrogen from 5-enolpyruvylshikimate-3-phosphate (EPSP) to yield chorismate, which is the branch point compound that serves as the starting substrate for the three terminal pathways of aromatic amino acid biosynthesis. This reaction introduces a second double bond into the aromatic ring system. The protein is Chorismate synthase of Bacillus velezensis (strain DSM 23117 / BGSC 10A6 / LMG 26770 / FZB42) (Bacillus amyloliquefaciens subsp. plantarum).